Reading from the N-terminus, the 185-residue chain is Elongation factor P (185 aa).

It belongs to the elongation factor P family.

It is found in the cytoplasm. Its pathway is protein biosynthesis; polypeptide chain elongation. Functionally, involved in peptide bond synthesis. Stimulates efficient translation and peptide-bond synthesis on native or reconstituted 70S ribosomes in vitro. Probably functions indirectly by altering the affinity of the ribosome for aminoacyl-tRNA, thus increasing their reactivity as acceptors for peptidyl transferase. In Streptococcus pyogenes serotype M49 (strain NZ131), this protein is Elongation factor P.